A 438-amino-acid polypeptide reads, in one-letter code: V-type ATP synthase beta chain (438 aa).

The protein belongs to the ATPase alpha/beta chains family.

Produces ATP from ADP in the presence of a proton gradient across the membrane. The V-type beta chain is a regulatory subunit. In Chlamydia trachomatis serovar L2b (strain UCH-1/proctitis), this protein is V-type ATP synthase beta chain.